A 492-amino-acid polypeptide reads, in one-letter code: Probable G-protein coupled receptor Mth-like 8 (492 aa).

An N-terminal signal peptide occupies residues 1 to 21; sequence MAQFCILGVLLILSGTHCSWG. Over 22 to 218 the chain is Extracellular; that stretch reads FHEETHYPCA…FVLGVREWTY (197 aa). Cystine bridges form between C30–C82, C84–C89, C93–C184, and C94–C107. Residues N37 and N51 are each glycosylated (N-linked (GlcNAc...) asparagine). N-linked (GlcNAc...) asparagine glycans are attached at residues N129, N169, and N192. A helical membrane pass occupies residues 219-239; it reads AICLLIAILSMFIVLMVYLMC. Topologically, residues 240–245 are cytoplasmic; sequence SEMRNS. The chain crosses the membrane as a helical span at residues 246–266; the sequence is FYGVAIKAYAICMILGYALLA. The Extracellular portion of the chain corresponds to 267–282; it reads YLTLHNPANLSNAACR. A glycan (N-linked (GlcNAc...) asparagine) is linked at N275. The chain crosses the membrane as a helical span at residues 283 to 303; it reads ILPSLALMNLVLSFYILSFIA. The Cytoplasmic segment spans residues 304–317; the sequence is FKLYLSFYGVVFTK. A helical membrane pass occupies residues 318 to 338; that stretch reads LMFWLIFTPIVLVAVGWSFFV. At 339 to 362 the chain is on the extracellular side; sequence GFSYYGSRLIFGGDTCWFDPRNWS. N-linked (GlcNAc...) asparagine glycosylation occurs at N360. A helical membrane pass occupies residues 363 to 383; that stretch reads VMIYFYAPVFVACAISGFFYV. Residues 384–411 are Cytoplasmic-facing; the sequence is LSQIYIRDQPDIETEKSFESIEKNRFKS. A helical membrane pass occupies residues 412–432; sequence FWKYFGYTAVVWVVCICSFAF. At 433 to 441 the chain is on the extracellular side; sequence NYYWENRSH. N438 is a glycosylation site (N-linked (GlcNAc...) asparagine). Residues 442–462 form a helical membrane-spanning segment; it reads LNYAVSFCMAFHGFAALYALI. Topologically, residues 463–492 are cytoplasmic; that stretch reads GKNQQIQNFLRRIDNGEDTCENSVPLSSFG.

Belongs to the G-protein coupled receptor 2 family. Mth subfamily.

Its subcellular location is the cell membrane. The polypeptide is Probable G-protein coupled receptor Mth-like 8 (mthl8) (Drosophila melanogaster (Fruit fly)).